Consider the following 422-residue polypeptide: Multifunctional CCA protein (422 aa).

The ATP site is built by Gly-8 and Arg-11. CTP contacts are provided by Gly-8 and Arg-11. Residues Asp-21 and Asp-23 each contribute to the Mg(2+) site. Positions 91, 137, and 140 each coordinate ATP. CTP-binding residues include Arg-91, Arg-137, and Arg-140. The HD domain maps to 228–329; sequence TGLHSLMALE…VKLLQSCDAW (102 aa). The tract at residues 403-422 is disordered; that stretch reads FKQDNAPEAQEKGGEDVGLT.

This sequence belongs to the tRNA nucleotidyltransferase/poly(A) polymerase family. Bacterial CCA-adding enzyme type 1 subfamily. As to quaternary structure, monomer. Can also form homodimers and oligomers. The cofactor is Mg(2+). Requires Ni(2+) as cofactor.

It carries out the reaction a tRNA precursor + 2 CTP + ATP = a tRNA with a 3' CCA end + 3 diphosphate. The catalysed reaction is a tRNA with a 3' CCA end + 2 CTP + ATP = a tRNA with a 3' CCACCA end + 3 diphosphate. In terms of biological role, catalyzes the addition and repair of the essential 3'-terminal CCA sequence in tRNAs without using a nucleic acid template. Adds these three nucleotides in the order of C, C, and A to the tRNA nucleotide-73, using CTP and ATP as substrates and producing inorganic pyrophosphate. tRNA 3'-terminal CCA addition is required both for tRNA processing and repair. Also involved in tRNA surveillance by mediating tandem CCA addition to generate a CCACCA at the 3' terminus of unstable tRNAs. While stable tRNAs receive only 3'-terminal CCA, unstable tRNAs are marked with CCACCA and rapidly degraded. This chain is Multifunctional CCA protein, found in Hahella chejuensis (strain KCTC 2396).